Here is a 261-residue protein sequence, read N- to C-terminus: Chloroplastic import inner membrane translocase subunit HP30-1 (261 aa).

Helical transmembrane passes span 59–77, 113–129, 139–155, and 163–180; these read AAVVSTMSGVQGAFIGGLM, NFAAITGVNAGIASVMK, SAVVAALGSGFAYSLVS, and MNAITTAAGFAVFQGVFF.

Belongs to the Tim17/Tim22/Tim23 family. Probable component of a protein-conducting channel made of HP30-1, HP30-2 and HP20 that mediates the import of transit sequence-less proteins into the chloroplastic inner membrane. Interacts with CEQORH.

The protein resides in the plastid. The protein localises to the chloroplast inner membrane. Its function is as follows. Together with HP30-2 and HP20, triggers the import and insertion of transit sequence-less multi-pass transmembrane proteins (e.g. CEQORH) into the chloroplastic inner membrane. This chain is Chloroplastic import inner membrane translocase subunit HP30-1, found in Arabidopsis thaliana (Mouse-ear cress).